We begin with the raw amino-acid sequence, 271 residues long: tRNA (guanine-N(1)-)-methyltransferase (271 aa).

S-adenosyl-L-methionine-binding positions include G120 and 145–150; that span reads IGDYVL.

The protein belongs to the RNA methyltransferase TrmD family. As to quaternary structure, homodimer.

The protein localises to the cytoplasm. The catalysed reaction is guanosine(37) in tRNA + S-adenosyl-L-methionine = N(1)-methylguanosine(37) in tRNA + S-adenosyl-L-homocysteine + H(+). In terms of biological role, specifically methylates guanosine-37 in various tRNAs. The polypeptide is tRNA (guanine-N(1)-)-methyltransferase (Bifidobacterium longum (strain NCC 2705)).